We begin with the raw amino-acid sequence, 610 residues long: Elongation factor 4 (610 aa).

The tr-type G domain maps to 11-193 (EKIRNFSIIA…QIVEKVPAPT (183 aa)). GTP is bound by residues 23–28 (DHGKST) and 140–143 (NKID).

The protein belongs to the TRAFAC class translation factor GTPase superfamily. Classic translation factor GTPase family. LepA subfamily.

Its subcellular location is the cell membrane. The catalysed reaction is GTP + H2O = GDP + phosphate + H(+). Its function is as follows. Required for accurate and efficient protein synthesis under certain stress conditions. May act as a fidelity factor of the translation reaction, by catalyzing a one-codon backward translocation of tRNAs on improperly translocated ribosomes. Back-translocation proceeds from a post-translocation (POST) complex to a pre-translocation (PRE) complex, thus giving elongation factor G a second chance to translocate the tRNAs correctly. Binds to ribosomes in a GTP-dependent manner. In Streptococcus pyogenes serotype M6 (strain ATCC BAA-946 / MGAS10394), this protein is Elongation factor 4.